The primary structure comprises 298 residues: Ethanolamine ammonia-lyase small subunit (298 aa).

Adenosylcob(III)alamin is bound by residues Val210, Glu231, and Cys261.

The protein belongs to the EutC family. In terms of assembly, the basic unit is a heterodimer which dimerizes to form tetramers. The heterotetramers trimerize; 6 large subunits form a core ring with 6 small subunits projecting outwards. The cofactor is adenosylcob(III)alamin.

Its subcellular location is the bacterial microcompartment. The enzyme catalyses ethanolamine = acetaldehyde + NH4(+). It participates in amine and polyamine degradation; ethanolamine degradation. Catalyzes the deamination of various vicinal amino-alcohols to oxo compounds. Allows this organism to utilize ethanolamine as the sole source of nitrogen and carbon in the presence of external vitamin B12. The protein is Ethanolamine ammonia-lyase small subunit of Salmonella schwarzengrund (strain CVM19633).